The following is a 434-amino-acid chain: A-adding tRNA nucleotidyltransferase (434 aa).

20–23 lines the ATP pocket; that stretch reads GAVR. Residues Asp-33 and Asp-35 each coordinate Mg(2+). ATP-binding positions include 91-92, Asn-96, 132-141, and Arg-177; these read RD and DPLRAWRAAR. One can recognise an HD domain in the interval 227–339; the sequence is VFEHGVEALH…ELLPDLLSLM (113 aa).

The protein belongs to the tRNA nucleotidyltransferase/poly(A) polymerase family. Requires Mg(2+) as cofactor.

It catalyses the reaction a tRNA with a 3' CC end + ATP = a tRNA with a 3' CCA end + diphosphate. Functionally, tRNA nucleotidyltransferase involved in the synthesis of the tRNA CCA terminus. Adds the terminal adenosine residue to tRNA. In Deinococcus radiodurans (strain ATCC 13939 / DSM 20539 / JCM 16871 / CCUG 27074 / LMG 4051 / NBRC 15346 / NCIMB 9279 / VKM B-1422 / R1), this protein is A-adding tRNA nucleotidyltransferase.